The following is a 3961-amino-acid chain: MSGILDRCTCTPNARVFVAEGQVYCTRCLSARSLLPLNLQVPELGVLGLFYRPEEPLRWTLPRAFPTVECSPTGACWLSAIFPIARMTSGNLNFQQRMVRVAGEIYRAGQLTPTVLKTIQVYERGCRWYPIVGPVPGVGVYANSLHVSDKPFPGATHVLTNLPLPQRPKPEDFCPFECAMADVYDIGRGAVMYVAGGKVSWAPRGGDEVKFEPVPKELKLVANRLHTSFPPHHVVDMSKFTFMTPGSGVSMRVEYQYGCLPADTVPEGNCWWRLFDLLPPEVQNKEIRHANQFGYQTKHGVPGKYLQRRLQVNGLRAVTDTHGPIVIQYFSVKESWIRHLKPVEEPSLPGFEDLLRIRVEPNTSPLAGKNEKIFRFGSHKWYGAGKRARKARSGATTMVAHRASSAHETRQATKHEGAGANKAEHLKLYSPPAEGNCGWHCISAIVNRMVNSNFETTLPERVRPPDDWATDEDLVNTIQILRLPAALDRNGACGGAKYVLKLEGEHWTVSVNPGMSPSLLPLECVQGCCEHKGGLGSPDAVEVSGFDPACLDRLLQVMHLPSSTIPAALAELSDDSNRPVSPAAATWTVSQSYARHRGGNHHDQVCLGKIISLCQVIEDCCCHQNKTNRATPEEVAAKIDQYLRGATSLEECLAKLERVSPPGAADTSFDWNVVLPGVEAAHQTTEQLHVNPCRTLVPPVTQEPLGKDSVPLTAFSLSNCYYPAQGNEVRHRERLNSVLSKLEEVVLEEYGLMSTGLGPRPVLPSGLDELKDQMEEDLLKLANTQATSEMMAWAAEQVDLKAWVKSYPRWTPPPPPPRVQPRKTKSVKSLPEDKPVPAPRRKVRSGCGSPVLMGDNVPNGSEDLTVGGPLNFPTPSEPMTPMSEPVLTPALQRVPKLMTPLDGSAPVPAPRRTVSRPMTPLSEPIFLSAPRHKFQQVEEANPATTTLTHQNEPLDLSASSQTEYEASPLASSQNMSILEAGGQEAEEVLSEISDILNDTSPAPVSSSSSLSSVKITRPKYSAQAIIDSGGPCSGHLQKEKEACLSIMREACDASKLSDPATQEWLSRMWDRVDMLTWRNTSAYQAFRTLNGRFEFLPKMILETPPPHPCGFVMLPHTPAPSVSAESDLTIGSVATEDVPRILGKIGDTGELLNQGPSAPFKGGPVCDQPAKNSRMSPRESDESIIAPPADTGGAGSFTDLPSSDSVDANGGGPLRTVKTKAGRLLDQLSCQVFSLVSHLPVFFSHLFKSDSGYSPGDWGFAAFTLFCLFLCYSYPFFGFAPLLGVFSGSSRRVRMGVFGCWLAFAVGLFKPVSDPVGTACEFDSPECRNVLHSFELLKPWDPVRSLVVGPVGLGLAILGRLLGGARYVWHFLLRFGIVADCILAGAYVLSQGRCKKCWGSCVRTAPNEIAFNVFPFTRATRSSLIDLCDRFCAPKGMDPIFLATVWRGCWTGRSPIEQPSEKPIAFAQLDEKRITARTVVAQPYDPNQAVKCLRVLQAGGAMVAEAVPKVVKVSAIPFRAPFFPAGVKVDPECRIVVDPDTFTTALRSGYSTTNLVLGMGDFAQLNGLKIRQISKPSGGGSHLVAALHVACSMALHMLAGVYVTAVGSCGTGTNDPWCTNPFAAPGYGPGSLCTSRLCISQHGLTLPLTALVAGFGLQEIALVVLIFVSMGGMAHRLSCKADMLCILLAIASYVWVPLTWLLCVFPCWLRWFSLHPLTILWLVFFLISVNIPSGILAVVLLVSLWLLGRYTNIAGLVTPYDIHHYTSGPRGVAALATAPDGTYLAAVRRAALTGRTMLFTPSQLGSLLEGAFRTQKPSLNTVNVVGSSMGSGGVFTIDGKIKCVTAAHVLTGNSARVSGVGFNQMLDFDVKGDFAIADCPNWQGAAPKAQFCEDGWTGRAYWLTSSGVEPGVIGNGFAFCFTACGDSGSPVITEAGELVGVHTGSNKQGGGIVTRPSGQFCNVTPIKLSELSEFFAGPKVPLGDVKIGSHIIKDTCEVPSDLCALLAAKPELEGGLSTVQLLCVFFLLWRMMGHAWTPLVAVGFFILNEILPAVLVRSVFSFGMFVLSWLTPWSAQVLMIRLLTAALNRNRLSLGFYSLGAVTSFVADLAVTQGHPLQVVMNLSTYAFLPRMMVVTSPVPVIACGVVHLLAIILYLFKYRCLHYVLVGDGVFSSAFFLRYFAEGKLREGVSQSCGMSHESLTGALAMRLTDEDLDFLTKWTDFKCFVSASNMRNAAGQFIEAAYAKALRIELAQLVQVDKVRGTLAKLEAFADTVAPQLSPGDIVVALGHTPVGSIFDLKVGSTKHTLQAIETRVLAGSKMTVARVVDPTPAPPPVPVPIPLPPKVLENGPNAWGDEDRLNKKKRRRMEAVGIFVMDGKKYQKFWDKNSGDVFYEEVHNSTDEWECLRAGDPADFDPETGVQCGHITIEDRVYNVFTSPSGRKFLVPANPENRRAQWEAAKLSVEQALGMMNVDGELTAKELEKLKGIIDKLQGLTKEQCLNCLLAASGLTRCGRGGLVVTETAVKIVKFHNRTFTLGPVNLKVASEVELKDAVEHNQHPVARPVDGGVVLLRSAVPSLIDVLISGADASPKLLARHGPGNTGIDGTLWDFEAEATKEEVALSAQIIQACDIRRGDAPEIGLPYKLYPVRGNPERVKGVLQNTRFGDIPYKTPSDTGSPVHAAACLTPNATPVTDGRSVLATTMPSGFELYVPTIPASVLDYLDSRPDCPKQLTEHGCEDAALRDLSKYDLVTQGFVLPGVLRLVRKYLFAHVGKCPPVHRPSTYPAKNSMAGINGNRFPTKDIQSVPEIDVLCAQAVRENWQTVTPCTLKKQYCGKKKTRTILGTNNFIALAHRAALSGVTQGFMKKAFNSPIALGKNKFKELQTPVLGRCLEADLASCDRSTPAIVRWFAANLLYELACAEEHLPSYVLNCCHDLLVTQSGAVTKRGGLSSGDPITSVSNTIYSLVIYAQHMVLSYFKSGHPHGLLFLQDQLKFEDMLKVQPLIVYSDDLVLYAESPSMPNYHWWVEHLNLMLGFQTDPKKTAITDSPTFLGCRIINGRQLVPNRDRILAALAYHMKASNVSEYYASAAAILMDSCACLEYDPEWFEELVVGIAQCARKDGYSFPGPPFFLSMWEKLRSNHEGKKSRMCGYCMAPAPYATACGLDVCVYHTHFHQHCPVIIWCGHPAGSGSCGECEPPLGKGTSPLDEVLEQVPYKPPRTVIMHVEQGLTPLDPGRYQTRRGLVSVRRGIRGNEVDLPDGDYASTALLPTCKEINMVAVAPNVLRSRFIIGPPGAGKTHWLLQQVQDGDVIYTPTHQTMLDMIRALGTCRFNVPAGTTLQFPAPSRTGPWVRILAGGWCPGKNSFLDEAAYCNHLDVLRLLSKTTLTCLGDFKQLHPVGFDSHCYVFDIMPQTQLKTIWRFGQNICDAIQPDYRDKLVSMVNTTRVTYVEKPVRYGQVLTPYHRDREDGAITIDSSQGATFDVVTLHLPTKDSLNRQRALVAITRARHAIFVYDPHRQLQSMFDLPAKGTPVNLAVHRDEQLIVLDRNNKEITVAQALGNGDKFRATDKRVVDSLRAICADLEGSSSPLPKVAHNLGFYFSPDLTQFAKLPAELAPHWPVVTTQNNERWPDRLVASLRPIHKYSRACIGAGYMVGPSVFLGTPGVVSYYLTKFVRGEAQVLPETVFSTGRIEVDCREYLDDREREVAESLPHAFIGDVKGTTVGGCHHVTSKYLPRFLPKESVAVVGVSSPGEAAKAFCTLTDVYLPDLEAYLHPETQSKCWKVMLDFKEVRLMVWKGKTAYFQLEGRHFTWYQLASYTSYIRVPVNSTVYLDPCMGPALCNRRVVGSTHWGADLAVTPYDYGAKIILSSAYHGEMPPGYKILACAEFSLDDPVRYKHTWGFESDTAYLYEFTGNGEDWEDYNGAFRARQKGKIYKATATSMKFHFPPGPVIEPTLGLN.

The segment at 8–28 (CTCTPNARVFVAEGQVYCTRC) adopts a C4-type; atypical zinc-finger fold. Residues 69 to 180 (ECSPTGACWL…EDFCPFECAM (112 aa)) enclose the Peptidase C31 domain. A PCP1-alpha region spans residues 69–182 (ECSPTGACWL…FCPFECAMAD (114 aa)). Catalysis depends on for Nsp1-alpha papain-like cysteine proteinase activity residues C76 and H146. The interval 199-200 (VS) is important for host EIF2AK2 inhibition. The PCP1-beta stretch occupies residues 263–382 (DTVPEGNCWW…IFRFGSHKWY (120 aa)). The Peptidase C32 domain maps to 263 to 383 (DTVPEGNCWW…FRFGSHKWYG (121 aa)). Residues C270 and H339 each act as for Nsp1-beta papain-like cysteine proteinase activity in the active site. An OTU-like region spans residues 426–513 (LKLYSPPAEG…GEHWTVSVNP (88 aa)). The Peptidase C33 domain maps to 428–535 (LYSPPAEGNC…QGCCEHKGGL (108 aa)). Catalysis depends on for Nsp2 cysteine proteinase activity residues C437 and H506. Residues 810-819 (WTPPPPPPRV) show a composition bias toward pro residues. Disordered regions lie at residues 810–875 (WTPP…FPTP), 899–918 (TPLD…SRPM), and 1148–1191 (TGEL…PADT). Transmembrane regions (helical) follow at residues 1266 to 1286 (FCLF…LGVF), 1296 to 1316 (GVFG…SDPV), 1368 to 1388 (VWHF…GAYV), 1583 to 1603 (LVAA…GVYV), 1648 to 1668 (LTAL…LIFV), 1685 to 1705 (CILL…LCVF), and 1719 to 1739 (ILWL…LAVV). Positions 1266–1388 (FCLFLCYSYP…ADCILAGAYV (123 aa)) are HD1. The interval 1583–1745 (LVAALHVACS…LAVVLLVSLW (163 aa)) is HD2. The Peptidase S32 domain occupies 1810–2013 (GAFRTQKPSL…ALLAAKPELE (204 aa)). Active-site charge relay system; for 3C-like serine proteinase activity residues include H1848, D1873, and S1927. A run of 5 helical transmembrane segments spans residues 2036–2056 (WTPL…AVLV), 2060–2080 (FSFG…VLMI), 2092–2112 (LSLG…LAVT), 2137–2157 (SPVP…LYLF), and 2162–2182 (LHYV…RYFA). An HD3 region spans residues 2036 to 2157 (WTPLVAVGFF…HLLAIILYLF (122 aa)). Residues 2488-2651 (IIDKLQGLTK…LPYKLYPVRG (164 aa)) form the NiRAN domain. The RdRp catalytic domain maps to 2890 to 3024 (GRCLEADLAS…YAESPSMPNY (135 aa)). The region spanning 3145-3208 (GKKSRMCGYC…PPLGKGTSPL (64 aa)) is the AV ZBD domain. Zn(2+) contacts are provided by C3151, C3154, C3164, C3169, H3172, H3174, H3176, H3178, C3185, H3187, C3194, and C3197. Residues 3265–3417 (ASTALLPTCK…VFDIMPQTQL (153 aa)) form the (+)RNA virus helicase ATP-binding domain. 3293–3300 (GPPGAGKT) provides a ligand contact to ATP. In terms of domain architecture, (+)RNA virus helicase C-terminal spans 3418-3546 (KTIWRFGQNI…AVHRDEQLIV (129 aa)). The AV-Nsp11N/CoV-Nsp15M domain occupies 3585-3681 (EGSSSPLPKV…LTKFVRGEAQ (97 aa)). The 123-residue stretch at 3683 to 3805 (LPETVFSTGR…MVWKGKTAYF (123 aa)) folds into the NendoU domain. Active-site residues include H3714, H3729, and K3758.

The protein belongs to the arteriviridae polyprotein family. Nsp1-alpha papain-like: Interacts with host RNF31. In terms of assembly, interacts with host EIF2AK2; this interaction occurs in host stress granules and leads to EIF2AK2 inhibition. Interacts with host G3BP1; this interaction probably plays a role in Nsp1-beta-mediated inhibition of host EIF2AK2. As to quaternary structure, interacts with host DDX18; this interaction redistributes host DDX18 to the cytoplasm. Interacts with host IFITM1. In terms of assembly, interacts with host DDX5. As to quaternary structure, interacts with host OTULIN. Interacts with host LGALS3. Post-translationally, specific enzymatic cleavages in vivo by its own proteases yield mature proteins. Nsp1 is autocleaved into two subunits, Nsp1-alpha and Nsp1-beta. There are two alternative pathways for processing. Either nsp4-5 is cleaved, which represents the major pathway or the nsp5-6 and nsp6-7 are processed, which represents the minor pathway. The major pathway occurs when nsp2 acts as a cofactor for nsp4.

The protein resides in the host nucleus. The protein localises to the host cytoplasm. It is found in the host membrane. Its subcellular location is the host endoplasmic reticulum. It localises to the host perinuclear region. The catalysed reaction is RNA(n) + a ribonucleoside 5'-triphosphate = RNA(n+1) + diphosphate. The enzyme catalyses ATP + H2O = ADP + phosphate + H(+). It carries out the reaction Thiol-dependent hydrolysis of ester, thioester, amide, peptide and isopeptide bonds formed by the C-terminal Gly of ubiquitin (a 76-residue protein attached to proteins as an intracellular targeting signal).. It catalyses the reaction uridylyl-uridylyl-ribonucleotide-RNA = a 3'-end uridylyl-2',3'-cyclophospho-uridine-RNA + a 5'-end dephospho-ribonucleoside-RNA. In terms of biological role, contains the activities necessary for the transcription of negative stranded RNA, leader RNA, subgenomic mRNAs and progeny virion RNA as well as proteinases responsible for the cleavage of the polyprotein into functional products. Functionally, inhibits host IFN-beta production. Plays a role in the degradation of the host transcriptional activator CREBBP protein. The degradation of host CREBBP which is a key component of the IFN enhanceosome is likely responsible for the inhibition of interferon mediated by Nsp1-alpha. Also participates in the inhibition of host NF-kappa-B activation by counteracting LUBAC-dependent induction of NF-kappa-B. Reduces host NEMO ubiquitination by blocking the interaction between the two LUBAC complex components RNF31 and SHARPIN. Plays a role in blocking host mRNA nuclear export to the cytoplasm and subversion of host protein synthesis. Additionally, inhibits the interferon-activated JAK/STAT signal transduction by mediating the ubiquitination and subsequent proteasomal degradation of host KPNA1. Repurposes the host antiviral stress granules into a proviral platform to counteract the EIF2AK2/PKR restriction, thereby regulating the host inflammatory response. Its function is as follows. Multifunctional protein that acts as a viral protease and as a viral antagonist of host immune response. Cleaves the nsp2/nsp3 site in the viral polyprotein. Displays deubiquitinating activity that cleaves both ubiquitinated and ISGylated products and therefore inhibits ubiquitin and ISG15-dependent host innate immunity. Also deubiquinates host NFKBIA, thereby interfering with NFKBIA degradation and impairing subsequent NF-kappa-B activation. In terms of biological role, plays a role in the inhibition of the immune response by interacting with host IFITM1. This interaction leads to the proteasomal degradation of the IFN-induced antiviral protein IFITM1. Functionally, cleaves the majority of cleavage sites present in the C-terminus of the polyprotein. Triggers host apoptosis through caspase-3, -8, and -9 activations. Subverts host innate immune responses through its protease activity. Targets the NF-kappa-B essential modulator NEMO and mediates its cleavage. Blocks host interferon beta induction and downstream signaling by cleaving mitochondrial MAVS, dislodging it from the mitochondria. Impairs host defense by cleaving host mRNA-decapping enzyme DCP1A to attenuate its antiviral activity. Plays a role in the initial induction of autophagosomes from host endoplasmic reticulum. Its function is as follows. Plays a role in the inhibition of host STAT3 signaling pathway by inducing the degradation of STAT3. In terms of biological role, responsible for replication and transcription of the viral RNA genome. Functionally, displays RNA and DNA duplex-unwinding activities with 5' to 3' polarity. Plays a role in viral transcription/replication and prevents the simultaneous activation of host cell dsRNA sensors, such as MDA5/IFIH1, OAS, PKR and NLRP3 inflammasome. Acts by degrading the 5'-polyuridines generated during replication of the poly(A) region of viral genomic and subgenomic RNAs. Catalyzes a two-step reaction in which a 2'3'-cyclic phosphate (2'3'-cP) is first generated by 2'-O transesterification, which is then hydrolyzed to a 3'-phosphate (3'-P). If not degraded, poly(U) RNA would hybridize with poly(A) RNA tails and activate host dsRNA sensors. Also plays a role in the inhibition of host type I interferon production by recruiting host OTULIN to promote removal of linear ubiquitination targeting host NEMO. The chain is Replicase polyprotein 1ab (rep) from Porcine reproductive and respiratory syndrome virus (strain HB-1) (PRRSV).